The following is a 1021-amino-acid chain: Ras-related protein Rab-44 (1021 aa).

A disordered region spans residues 1–40 (METGQRTSRKVRKLGSNRRRQTREPADGEGAAVAPEPESW). Basic residues predominate over residues 7-21 (TSRKVRKLGSNRRRQ). In terms of domain architecture, EF-hand spans 77 to 112 (GSKEESEMIFDWVDVERKGHLSLEEFSSGLKNIFGS). The segment at 113-133 (SQSPHRLRRRKPLPSKRVSAT) is disordered. Over residues 117–126 (HRLRRRKPLP) the composition is skewed to basic residues. Residues 191–315 (LAKMTSRLQE…AGRLEEVRGQ (125 aa)) are a coiled coil. Disordered regions lie at residues 339–405 (SFPG…QTPR), 419–483 (LFGQ…LLWG), and 495–827 (VLIP…GGPQ). Basic and acidic residues predominate over residues 443 to 467 (KDNKGVDPHEQDIRAEQPVEPHDPD). Residues 501–514 (DGPPPPANSPPPQA) show a composition bias toward pro residues. A compositionally biased stretch (low complexity) spans 532–559 (PGSWAPPSGAQPGAGAGPQEPTQTPPTM). Residues 676 to 685 (SEEGKQEGRG) show a composition bias toward basic and acidic residues. 2 stretches are compositionally biased toward polar residues: residues 688-697 (DLSSEQSEQS) and 710-727 (LPQQ…TPQA). Residues 736–759 (PGKSAPPRGSPPRGAQPGAGAGPQ) are compositionally biased toward low complexity. Basic and acidic residues predominate over residues 783–810 (HAEEQGPPHSREPRAESRLEDPGMDSRE). Residues 840–847 (GDSNVGKT), 888–892 (DTAGQ), and 946–949 (NKMD) contribute to the GTP site. S-geranylgeranyl cysteine attachment occurs at residues C1019 and C1020.

Belongs to the small GTPase superfamily. Rab family.

It is found in the cell membrane. The polypeptide is Ras-related protein Rab-44 (RAB44) (Homo sapiens (Human)).